The chain runs to 206 residues: Small ribosomal subunit protein uS4 (206 aa).

Positions 96–156 (CRLDNVVYRM…EKSLNQLRIV (61 aa)) constitute an S4 RNA-binding domain.

It belongs to the universal ribosomal protein uS4 family. Part of the 30S ribosomal subunit. Contacts protein S5. The interaction surface between S4 and S5 is involved in control of translational fidelity.

In terms of biological role, one of the primary rRNA binding proteins, it binds directly to 16S rRNA where it nucleates assembly of the body of the 30S subunit. Functionally, with S5 and S12 plays an important role in translational accuracy. The chain is Small ribosomal subunit protein uS4 from Pseudomonas entomophila (strain L48).